The sequence spans 520 residues: MASYKPVVIPAVPKLGEKITQDTLYWRGYKTPVQIKEFGAINKIDFSPVPPYNYAVTASSRVHIYGRYSQEPIKTFSRFKDAAYCATYRDDGKLLVAGSEEGSIRLFDISGRAPLRQFDGHTKAVHVVGFLSDKYRIFSGGDDYSSSLWDIPSATEIVSYSEHSDYVRCGCASKLNGDVFITGSYDHTVKVFDARTKSSVMTIEHGHPVESVLLFPSGGLLVSAGGRYVKVWDVLKGGQLLVSLKNHHKTVTCLCLNSSGQRLLSGSLDRHVKIYSTTSYKVVHSFNYATSILSLALSPEDETIIVGMTNGVLNVKHRKPEESKEKSQKKRQPAYRTYVKGRNYMPKQEDFFVSKPGRCIMRKYDKLLKSFQSSKALDAVLEPHIRLYTPEVTVAVMQELNRRGTLRSALAGRDEKQISLLLTFVTRRVIEPRFTPVLITVADMITDIYQPVVGQSALVDKQFLRLQEAIGREIDYQEELLEVLGMMDALFATLTEKRATYLEENKSNGLTKTLDQDISI.

7 WD repeats span residues 36–75, 78–117, 120–159, 162–202, 204–242, 246–285, and 287–326; these read KEFG…PIKT, RFKD…PLRQ, GHTK…EIVS, EHSD…SVMT, EHGH…QLLV, NHHK…VVHS, and NYAT…SKEK.

As to quaternary structure, part of the small subunit (SSU) processome, composed of more than 70 proteins and the RNA chaperone small nucleolar RNA (snoRNA) U3. May be a component of the proposed t-UTP subcomplex of the ribosomal small subunit (SSU) processome.

The protein resides in the nucleus. Its subcellular location is the nucleolus. In terms of biological role, ribosome biogenesis factor. Involved in nucleolar processing of pre-18S ribosomal RNA. Required for optimal pre-ribosomal RNA transcription by RNA polymerase I. Part of the small subunit (SSU) processome, first precursor of the small eukaryotic ribosomal subunit. During the assembly of the SSU processome in the nucleolus, many ribosome biogenesis factors, an RNA chaperone and ribosomal proteins associate with the nascent pre-rRNA and work in concert to generate RNA folding, modifications, rearrangements and cleavage as well as targeted degradation of pre-ribosomal RNA by the RNA exosome. This Gallus gallus (Chicken) protein is U3 small nucleolar RNA-associated protein 15 homolog (UTP15).